We begin with the raw amino-acid sequence, 106 residues long: ER membrane protein complex subunit 5 (106 aa).

Residues 1–12 (MESSTINAKKIS) are Cytoplasmic-facing. A helical membrane pass occupies residues 13–33 (VLLTLFSIIGYTAYSAHESIL). At 34 to 46 (EIRQDGKLPLDIK) the chain is on the lumenal side. Residues 47–67 (CEVILVTLLFTFTTVIIASPL) traverse the membrane as a helical segment. The Cytoplasmic segment spans residues 68-106 (RSIQLNKWSHQRSDLAFLNSRTNFLRIKELKEKIEKVKN).

This sequence belongs to the membrane magnesium transporter (TC 1.A.67) family. As to quaternary structure, component of the ER membrane protein complex (EMC).

It localises to the endoplasmic reticulum membrane. Its function is as follows. The EMC seems to be required for efficient folding of proteins in the endoplasmic reticulum (ER). In Schizosaccharomyces pombe (strain 972 / ATCC 24843) (Fission yeast), this protein is ER membrane protein complex subunit 5 (emc5).